Reading from the N-terminus, the 1220-residue chain is MAAREQANSVRRSGFFNPFIGKRPFFRPGSGQTAETERPRPPQHSYCTEVGSFKFIAPRCLDEEAPADQRRGVHVGTLERPPKVYCDGSEYDVLNFASGGCWPRRIRVWNGQDFRGDGFNPRFERFHVYDIVETSESASHDDPSRFAELSRPSGSVVTLLGMSECGKRVAVHVYGVRHYFYMAKAEVDSACGITTEAELVRAMVDCAHSSALSAALGNGNGGKQSGGSGGGWWGGKHVSADCFKVETVCHTTLYYFGSKPALYYRVSASSSRLGGFICDNFHPEITKFEGSVDVTTRLLLDNENFTSFGWYRLRPGTHGERVQLRPVERHVTSSDVEINCTPDNLEPIPDEAAWPDYKLMCFDIECKAGTGNEMAFPVATNQEDLVIQISCLLYSLATQNHEHTLLFSLGSCDISEEYSFACVQRGEPRPTVLEFDSEYELLVAFLTFLKQYSPEFATGYNIVNFDWAYIVNKVTSVYNIKLDGYGKFNKGGLFKVWDIATNHFQKKSKVKINGLISLDMYSVATEKLKLPSYKLDAVVGDVLGEHKIDLPYKEIPSYYAGGPDRRGVIGEYCIQDSRLVGKLFFKYLPHLELSAVAKLARITLTRVIFDGQQIRVYTCLLKLARERNFILPDNRRRFDSQADAASETSELAMDSQSHAFDSTDEPDGVDGTPDAAGSGATSENGGGKPGVGRAVGYQGAKVLDPVSGFHVDPVVVFDFASLYPSIIQAHNLCFTTLALDEVDLAGLQPSVNYSTFEVGDQKLFFVHAHIRESLLGILLRDWLAMRKAVRARIPTSTPEEAVLLDKQQSAIKVICNSVYGFTGVANGLLPCLRIAATVTTIGRDMLLKTRDYVHSRWATRELLEDNFPGAIGFRNHKPYSVRVIYGDTDSVFIKFVGLTYEGVSELGDAMSRQISADLFRAPIKLECEKTFQRLLLITKKKYIGVINGGKMLMKGVDLVRKNNCSFINLYARHLVDLLLYDEDVATAAAKVTDVPPAEWVGRPLPSGFDKFGRVLVEAYNRITAPNLDVREFVMTAELSRSPESYTNKRLPHLTVYFKLAMRNEELPSVKERIPYVIVAQTEAAEREAGVVNSMRGTAQNPVVTKTARPQPKRKLLVSDLAEDPTYVSENDVPLNTDYYFSHLLGTISVTFKALFGNDVRTTENLLKRFIPETPHKTPTKTQALLERAGFEKLTPFTPEEESRRILHTVFCTLEAAPHQS.

Disordered stretches follow at residues 21 to 43 (GKRP…RPPQ) and 641 to 691 (QADA…KPGV). Positions 646-660 (SETSELAMDSQSHAF) are enriched in polar residues.

It belongs to the DNA polymerase type-B family. As to quaternary structure, forms a complex with the ssDNA-binding protein, the DNA polymerase processivity factor, and the alkaline exonuclease. Interacts with the helicase-primase complex composed of the primase, the helicase and the primase-associated factor; this interaction may coordinate leading and lagging strand DNA synthesis at the replication fork.

The protein localises to the host nucleus. The catalysed reaction is DNA(n) + a 2'-deoxyribonucleoside 5'-triphosphate = DNA(n+1) + diphosphate. It catalyses the reaction Endonucleolytic cleavage to 5'-phosphomonoester.. In terms of biological role, replicates viral genomic DNA. The replication complex is composed of six viral proteins: the DNA polymerase, processivity factor, primase, primase-associated factor, helicase, and ssDNA-binding protein. Additionally, the polymerase contains an intrinsic ribonuclease H (RNase H) activity that specifically degrades RNA/DNA heteroduplexes or duplex DNA substrates in the 5' to 3' direction. Therefore, it can catalyze the excision of the RNA primers that initiate the synthesis of Okazaki fragments at a replication fork during viral DNA replication. This chain is DNA polymerase catalytic subunit, found in Equus caballus (Horse).